The following is a 248-amino-acid chain: Probable transcriptional regulatory protein BARBAKC583_0163 (248 aa).

Belongs to the TACO1 family.

The protein resides in the cytoplasm. This Bartonella bacilliformis (strain ATCC 35685 / KC583 / Herrer 020/F12,63) protein is Probable transcriptional regulatory protein BARBAKC583_0163.